A 500-amino-acid polypeptide reads, in one-letter code: Aspartyl/glutamyl-tRNA(Asn/Gln) amidotransferase subunit B (500 aa).

The protein belongs to the GatB/GatE family. GatB subfamily. In terms of assembly, heterotrimer of A, B and C subunits.

The enzyme catalyses L-glutamyl-tRNA(Gln) + L-glutamine + ATP + H2O = L-glutaminyl-tRNA(Gln) + L-glutamate + ADP + phosphate + H(+). It carries out the reaction L-aspartyl-tRNA(Asn) + L-glutamine + ATP + H2O = L-asparaginyl-tRNA(Asn) + L-glutamate + ADP + phosphate + 2 H(+). In terms of biological role, allows the formation of correctly charged Asn-tRNA(Asn) or Gln-tRNA(Gln) through the transamidation of misacylated Asp-tRNA(Asn) or Glu-tRNA(Gln) in organisms which lack either or both of asparaginyl-tRNA or glutaminyl-tRNA synthetases. The reaction takes place in the presence of glutamine and ATP through an activated phospho-Asp-tRNA(Asn) or phospho-Glu-tRNA(Gln). This chain is Aspartyl/glutamyl-tRNA(Asn/Gln) amidotransferase subunit B, found in Brucella melitensis biotype 2 (strain ATCC 23457).